Here is a 194-residue protein sequence, read N- to C-terminus: Thymidylate kinase (194 aa).

7 to 14 (GVDGVGKS) lines the ATP pocket.

Belongs to the thymidylate kinase family.

The catalysed reaction is dTMP + ATP = dTDP + ADP. In terms of biological role, phosphorylation of dTMP to form dTDP in both de novo and salvage pathways of dTTP synthesis. The polypeptide is Thymidylate kinase (Campylobacter curvus (strain 525.92)).